Reading from the N-terminus, the 365-residue chain is MVPFLRILGIETSCDETAAAVVERDAEGHSNVLSDVVLSQLDEHSAYGGVVPEIAARAHVEALDELIEEALKRANVSLNDVDAIAATSGPGLIGGLLVGLMTGKAIARAAGKPLYAINHLEGHALTARLTDGLSFPYLMLLVSGGHTQLILVRGVGQYERWGTTIDDALGEAFDKTAKLLGLPYPGGPAVERMARDGNPDRFDFPRPLVGEARLDFSFSGLKTAVRQAAQDIAPLSDQDVADICASFQKAVSRTLKDRIGRGLQRFKTEFPATGEKPALVVAGGVAANLELRGTLQALCNKNGFRFIAPPLHLCTDNAVMIAWAGLERMATGAAPDTLDVQPRSRWPLDSNAETLIGFGKRGAKA.

Positions 119 and 123 each coordinate Fe cation. Substrate-binding positions include 141–145 (LVSGG), aspartate 174, glycine 187, and asparagine 288. Aspartate 316 is a binding site for Fe cation.

Belongs to the KAE1 / TsaD family. Requires Fe(2+) as cofactor.

It is found in the cytoplasm. The catalysed reaction is L-threonylcarbamoyladenylate + adenosine(37) in tRNA = N(6)-L-threonylcarbamoyladenosine(37) in tRNA + AMP + H(+). In terms of biological role, required for the formation of a threonylcarbamoyl group on adenosine at position 37 (t(6)A37) in tRNAs that read codons beginning with adenine. Is involved in the transfer of the threonylcarbamoyl moiety of threonylcarbamoyl-AMP (TC-AMP) to the N6 group of A37, together with TsaE and TsaB. TsaD likely plays a direct catalytic role in this reaction. In Rhizobium johnstonii (strain DSM 114642 / LMG 32736 / 3841) (Rhizobium leguminosarum bv. viciae), this protein is tRNA N6-adenosine threonylcarbamoyltransferase.